Consider the following 421-residue polypeptide: Non-homologous end-joining factor LIF1 (421 aa).

The interval 1 to 196 (MSQLTEFISC…VEQLAREREL (196 aa)) is interaction with NEJ1. The disordered stretch occupies residues 365-421 (GIQISAGRSDEDYGDISGSESETDASAGEKKSSNHSEQSGNDREPCLQTESETDIET). A compositionally biased stretch (basic and acidic residues) spans 391–409 (AGEKKSSNHSEQSGNDREP).

This sequence belongs to the XRCC4-XLF family. XLF subfamily. As to quaternary structure, interacts with DNL4 (via BRCT domain). Interacts (via N-terminus) with NEJ1 (via C-terminus); the interaction is direct. The DNL4-LIF1 complex interacts with POL4.

The protein resides in the cytoplasm. It is found in the nucleus. Its function is as follows. Involved in non-homologous repair of DNA double-strand breaks. Stabilizes DNL4. This is Non-homologous end-joining factor LIF1 (LIF1) from Saccharomyces cerevisiae (strain ATCC 204508 / S288c) (Baker's yeast).